Reading from the N-terminus, the 971-residue chain is MQSNLLKVLGVLAIVATLVCFIFAALGMIGAVRIGNGCYMRYSKDGNGGADSITNTITLNANANYFNISKMLPDGTTKLIPDPNRYGEWLNTQVLVEKNQQVNLQVVGQVSLCLAYLPKNNLQFTERTRPGKSNLDDSNQMIPIPRVQDANSPPVSLIMDAKNNEWRNIAELYANDKVLVSVSPNFANTDATVDDVFKGVKVTKDCTQGKTSYYPICGKYSIYSGKYVTACELKQNYWKGNVHREECYCVFGCIYQEENEQWICDAANSASHCCTSLVCDSLPAWINHYSNMPEAYKDDGSFTFSWSDKSGNLLIDYQDLQCSNNVQIPPNGECPDIVDNRNPKDKDYIGGVHCTSGICKDGDFQKNRKFWYTADGKGGKGPTGLIYQMNNTGSVSQALPSNLEFAKFVPETEQPPEYKDKNGKYLYKVIYNIPFNSNIEKSYLQYRLWSPTSQDSSKNTGGYVLNIKQTKCYRENGNSFKDIFDDRGRVQYIIVQSSENPNTSGKTYAPQGINVDSDGKSHFNANEAGYIWMKILNDPSNNLKDYKDSEGSYKVHFSTSLKVGSFTIKVMNPLLQLFKTKVQGAATSIFKNMVCYKSTDNTSCTNFFTYIKAILILYVMTYGAMFLLGFAKINQKELVIRIAKIGMVSGLINGNTFEFFNNYLFDAITNFSDSIIANMSGYSLFTSTNTISNPFMFLDAIMSKIFFSQTFIAQLLSLLSLGLSGIIYFIITFIAVCIVIITTLRAIAVYIMAFMATCILIGIAPLFISFLLFDFTRYLFDNWVRFTIRYMIEPVVMMAGIIVLTQLFTIYLDFVLGYSVCWKCTLPIKIPFIGTILPIALLNVPIFCINWFAPWGMDYMSGMMGVNMQNIVALVIIAYGMYGYVEFSGRMVAKLTSAAGPSATQIGDRMSHDAGQKTLSQIGMDYRTRKGITSRAKSRLKQRNRTLEHAEQNSKKYMKKIGENTNEGTLK.

The first 24 residues, 1 to 24, serve as a signal peptide directing secretion; the sequence is MQSNLLKVLGVLAIVATLVCFIFA. The tract at residues 127–146 is disordered; that stretch reads RTRPGKSNLDDSNQMIPIPR. The next 6 membrane-spanning stretches (helical) occupy residues 611–631, 721–741, 753–773, 795–815, 832–852, and 865–885; these read IKAILILYVMTYGAMFLLGFA, LGLSGIIYFIITFIAVCIVII, AFMATCILIGIAPLFISFLLF, VVMMAGIIVLTQLFTIYLDFV, FIGTILPIALLNVPIFCINWF, and GVNMQNIVALVIIAYGMYGYV. The segment covering 933 to 944 has biased composition (basic residues); sequence TSRAKSRLKQRN. Residues 933–971 form a disordered region; sequence TSRAKSRLKQRNRTLEHAEQNSKKYMKKIGENTNEGTLK. Residues 945 to 954 show a composition bias toward basic and acidic residues; that stretch reads RTLEHAEQNS.

Belongs to the TrbL/VirB6 family.

The protein localises to the cell membrane. This is an uncharacterized protein from Rickettsia typhi (strain ATCC VR-144 / Wilmington).